The chain runs to 121 residues: Cell division protein FtsB (121 aa).

Topologically, residues 1–6 are cytoplasmic; it reads MRNWRW. A helical transmembrane segment spans residues 7–24; sequence LLLVLAVLLAWLQYRFWF. Residues 25-121 lie on the Periplasmic side of the membrane; it reads GPGNSGEVMM…AASADPVDHP (97 aa). The stretch at 31-66 forms a coiled coil; it reads EVMMLEAQVAHQTRDNEGLRQRNQALAAEVKDLKDG. The segment at 98 to 121 is disordered; the sequence is PPAAQEAAPPAQPPAASADPVDHP.

It belongs to the FtsB family. Part of a complex composed of FtsB, FtsL and FtsQ.

The protein resides in the cell inner membrane. Its function is as follows. Essential cell division protein. May link together the upstream cell division proteins, which are predominantly cytoplasmic, with the downstream cell division proteins, which are predominantly periplasmic. The sequence is that of Cell division protein FtsB from Xanthomonas campestris pv. campestris (strain 8004).